A 271-amino-acid chain; its full sequence is Phosphatidylglycerol--prolipoprotein diacylglyceryl transferase (271 aa).

Transmembrane regions (helical) follow at residues 21–41 (LAVR…MWLA), 60–80 (LLFA…VIFY), 95–115 (VWTG…AMFW), 124–144 (FFGV…MGRI), 177–197 (QLYE…WFIG), 203–223 (GSVS…VEYV), and 236–256 (FISM…LMMV). Arg143 provides a ligand contact to a 1,2-diacyl-sn-glycero-3-phospho-(1'-sn-glycerol).

The protein belongs to the Lgt family.

It localises to the cell inner membrane. The enzyme catalyses L-cysteinyl-[prolipoprotein] + a 1,2-diacyl-sn-glycero-3-phospho-(1'-sn-glycerol) = an S-1,2-diacyl-sn-glyceryl-L-cysteinyl-[prolipoprotein] + sn-glycerol 1-phosphate + H(+). The protein operates within protein modification; lipoprotein biosynthesis (diacylglyceryl transfer). Functionally, catalyzes the transfer of the diacylglyceryl group from phosphatidylglycerol to the sulfhydryl group of the N-terminal cysteine of a prolipoprotein, the first step in the formation of mature lipoproteins. This Vibrio cholerae serotype O1 (strain ATCC 39541 / Classical Ogawa 395 / O395) protein is Phosphatidylglycerol--prolipoprotein diacylglyceryl transferase.